The sequence spans 156 residues: 6,7-dimethyl-8-ribityllumazine synthase (156 aa).

5-amino-6-(D-ribitylamino)uracil is bound by residues Phe-23, 57–59 (AFE), and 81–83 (AVI). 86-87 (AT) contributes to the (2S)-2-hydroxy-3-oxobutyl phosphate binding site. The Proton donor role is filled by His-89. A 5-amino-6-(D-ribitylamino)uracil-binding site is contributed by Phe-114. Arg-128 contacts (2S)-2-hydroxy-3-oxobutyl phosphate.

It belongs to the DMRL synthase family.

It carries out the reaction (2S)-2-hydroxy-3-oxobutyl phosphate + 5-amino-6-(D-ribitylamino)uracil = 6,7-dimethyl-8-(1-D-ribityl)lumazine + phosphate + 2 H2O + H(+). It functions in the pathway cofactor biosynthesis; riboflavin biosynthesis; riboflavin from 2-hydroxy-3-oxobutyl phosphate and 5-amino-6-(D-ribitylamino)uracil: step 1/2. Functionally, catalyzes the formation of 6,7-dimethyl-8-ribityllumazine by condensation of 5-amino-6-(D-ribitylamino)uracil with 3,4-dihydroxy-2-butanone 4-phosphate. This is the penultimate step in the biosynthesis of riboflavin. In Campylobacter concisus (strain 13826), this protein is 6,7-dimethyl-8-ribityllumazine synthase.